A 235-amino-acid chain; its full sequence is Sugar fermentation stimulation protein homolog (235 aa).

Belongs to the SfsA family.

The protein is Sugar fermentation stimulation protein homolog of Aliivibrio fischeri (strain MJ11) (Vibrio fischeri).